The chain runs to 315 residues: tRNA dimethylallyltransferase (315 aa).

13–20 (GPTASGKT) is an ATP binding site. Substrate is bound at residue 15–20 (TASGKT). Interaction with substrate tRNA stretches follow at residues 38–41 (DSAL), 162–166 (QRLSR), 243–248 (RCVGYR), and 276–283 (KRQITWLR).

The protein belongs to the IPP transferase family. In terms of assembly, monomer. It depends on Mg(2+) as a cofactor.

It catalyses the reaction adenosine(37) in tRNA + dimethylallyl diphosphate = N(6)-dimethylallyladenosine(37) in tRNA + diphosphate. In terms of biological role, catalyzes the transfer of a dimethylallyl group onto the adenine at position 37 in tRNAs that read codons beginning with uridine, leading to the formation of N6-(dimethylallyl)adenosine (i(6)A). This chain is tRNA dimethylallyltransferase, found in Vibrio cholerae serotype O1 (strain ATCC 39541 / Classical Ogawa 395 / O395).